Consider the following 245-residue polypeptide: MEPATSRAPRSRFVVWLHGLGDTGRANEFLADSFPTTAAFADARWAFPTAPTAPVTCNRGMLMPSWFDIHDAPITSVSVRDEEDVLRAVQSVHAMIDREIAAGTNPQDVFVFGLSQGGALGIASVLLHPKTLGGCAVFSGFLPFNSSFAVRVTAQAKKTPVLWIHGQAGSLIPIKEGRDGIKFLRGLGMSCEFKVYDRLGHSLEYYELDYCQRWVEKILHRSGREGLIRRVSRNIFLCSNLFNSS.

Active-site charge relay system residues include serine 115 and histidine 201.

The protein belongs to the AB hydrolase superfamily. AB hydrolase 2 family.

The sequence is that of Probable inactive carboxylesterase Os04g0669700 from Oryza sativa subsp. japonica (Rice).